A 622-amino-acid chain; its full sequence is Pentatricopeptide repeat-containing protein At5g06540 (622 aa).

PPR repeat units follow at residues 81-115 (NLFV…RIWP), 116-150 (DNIT…GFQN), 151-181 (DVYV…MGFR), 182-212 (DVVS…MPHR), 213-247 (NLFT…GVVA), 248-282 (NETV…HMTV), 283-313 (NLIL…LPET), 314-348 (DSLS…GFIP), 349-384 (RDVT…GIEP), and 385-419 (RLEH…PNAP). Positions 420–495 (ILGALLGACK…PPGWSLIEID (76 aa)) are type E motif. Residues 496–527 (GKINKFTMGDDQKHPEMGKIRRKWEEILGKIR) form a type E(+) motif region. A type DYW motif region spans residues 528 to 622 (LIGYKGNTGD…NGVCSCRDYW (95 aa)).

Belongs to the PPR family. PCMP-H subfamily.

The polypeptide is Pentatricopeptide repeat-containing protein At5g06540 (PCMP-H88) (Arabidopsis thaliana (Mouse-ear cress)).